The sequence spans 428 residues: MAQILAASPTCQMRLTKPSSIASSKLWNSVVLKQKKQSSSKVRSFKVMALQSDNSTINRVESLLNLDTKPFTDRIIAEYIWIGGSGIDLRSKSRTLEKPVEDPSELPKWNYDGSSTGQAPGEDSEVILYPQAIFRDPFRGGNNILVICDTYTPAGEPIPTNKRARAAEIFSNKKVNEEIPWFGIEQEYTLLQPNVNWPLGWPVGAYPGPQGPYYCGVGAEKSWGRDISDAHYKACLYAGINISGTNGEVMPGQWEFQVGPSVGIEAGDHVWCARYLLERITEQAGVVLTLDPKPIEGDWNGAGCHTNYSTKSMREDGGFEVIKKAILNLSLRHMEHISAYGEGNERRLTGKHETASIDQFSWGVANRGCSIRVGRDTEKKGKGYLEDRRPASNMDPYIVTSLLAETTLLWEPTLEAEALAAQKLSLKV.

The N-terminal 49 residues, 1 to 49 (MAQILAASPTCQMRLTKPSSIASSKLWNSVVLKQKKQSSSKVRSFKVMA), are a transit peptide targeting the chloroplast. One can recognise a GS beta-grasp domain in the interval 75-155 (IIAEYIWIGG…VICDTYTPAG (81 aa)). Residues 94–120 (RTLEKPVEDPSELPKWNYDGSSTGQAP) form a disordered region. Serine 104 carries the post-translational modification Phosphoserine. Positions 159-428 (PTNKRARAAE…LAAQKLSLKV (270 aa)) constitute a GS catalytic domain.

It belongs to the glutamine synthetase family. As to quaternary structure, homooctamer.

It localises to the plastid. Its subcellular location is the chloroplast. The enzyme catalyses L-glutamate + NH4(+) + ATP = L-glutamine + ADP + phosphate + H(+). Its function is as follows. The light-modulated chloroplast enzyme, encoded by a nuclear gene and expressed primarily in leaves, is responsible for the reassimilation of the ammonia generated by photorespiration. This Brassica napus (Rape) protein is Glutamine synthetase, chloroplastic (GLN2).